The sequence spans 243 residues: CD48 antigen (243 aa).

Residues 1-26 (MCSRGWDSCLALELLLLPLSLLVTSI) form the signal peptide. 2 Ig-like C2-type domains span residues 29–127 (HLVH…KLQV) and 132–212 (PKPV…VCLS). 5 N-linked (GlcNAc...) asparagine glycosylation sites follow: Asn40, Asn44, Asn104, Asn162, and Asn189. Cys154 and Cys196 are joined by a disulfide. Residue Ser220 is the site of GPI-anchor amidated serine attachment. Positions 221–243 (FGVEWIASWLVVTVPTILGLLLT) are cleaved as a propeptide — removed in mature form.

Interacts with CD2. Interacts with CD244; this interaction is possible not only on different cells (trans interaction) but also on the same cell (cis interaction). Interacts with LCK. As to expression, widely expressed on all hematopoietic cells.

It is found in the cell membrane. Its subcellular location is the membrane raft. The protein localises to the secreted. Glycosylphosphatidylinositol (GPI)-anchored cell surface glycoprotein that interacts via its N-terminal immunoglobulin domain with cell surface receptors including CD244/2B4 or CD2 to regulate immune cell function and activation. Participates in T-cell signaling transduction by associating with CD2 and efficiently bringing the Src family protein kinase LCK and LAT to the TCR/CD3 complex. In turn, promotes LCK phosphorylation and subsequent activation. Induces the phosphorylation of the cytoplasmic immunoreceptortyrosine switch motifs (ITSMs) of CD244 initiating a series of signaling events that leads to the generation of the immunological synapse and the directed release of cytolytic granules containing perforin and granzymes by T-lymphocytes and NK-cells. This chain is CD48 antigen (CD48), found in Homo sapiens (Human).